Here is a 590-residue protein sequence, read N- to C-terminus: Probable metalloendopeptidase G1-type (590 aa).

H41 serves as a coordination point for Zn(2+). E44 is a catalytic residue. H45 is a Zn(2+) binding site.

The protein belongs to the peptidase M44 family. Requires Zn(2+) as cofactor.

Functionally, seems to be involved in viral proteins maturation by cleavage at Ala-Gly-|-Xaa motifs. This Oryctolagus cuniculus (Rabbit) protein is Probable metalloendopeptidase G1-type (GP045L).